A 380-amino-acid polypeptide reads, in one-letter code: Queuine tRNA-ribosyltransferase (380 aa).

The active-site Proton acceptor is Asp96. Substrate-binding positions include 96-100 (DSGGF), Asp150, Gln193, and Gly220. An RNA binding region spans residues 251–257 (GVGAPDS). Asp270 acts as the Nucleophile in catalysis. The tract at residues 275 to 279 (TRIAR) is RNA binding; important for wobble base 34 recognition. Zn(2+) is bound by residues Cys308, Cys310, Cys313, and His339.

Belongs to the queuine tRNA-ribosyltransferase family. As to quaternary structure, homodimer. Within each dimer, one monomer is responsible for RNA recognition and catalysis, while the other monomer binds to the replacement base PreQ1. Zn(2+) serves as cofactor.

It carries out the reaction 7-aminomethyl-7-carbaguanine + guanosine(34) in tRNA = 7-aminomethyl-7-carbaguanosine(34) in tRNA + guanine. Its pathway is tRNA modification; tRNA-queuosine biosynthesis. Functionally, catalyzes the base-exchange of a guanine (G) residue with the queuine precursor 7-aminomethyl-7-deazaguanine (PreQ1) at position 34 (anticodon wobble position) in tRNAs with GU(N) anticodons (tRNA-Asp, -Asn, -His and -Tyr). Catalysis occurs through a double-displacement mechanism. The nucleophile active site attacks the C1' of nucleotide 34 to detach the guanine base from the RNA, forming a covalent enzyme-RNA intermediate. The proton acceptor active site deprotonates the incoming PreQ1, allowing a nucleophilic attack on the C1' of the ribose to form the product. After dissociation, two additional enzymatic reactions on the tRNA convert PreQ1 to queuine (Q), resulting in the hypermodified nucleoside queuosine (7-(((4,5-cis-dihydroxy-2-cyclopenten-1-yl)amino)methyl)-7-deazaguanosine). The chain is Queuine tRNA-ribosyltransferase from Streptococcus pneumoniae (strain Hungary19A-6).